Consider the following 658-residue polypeptide: Threonine--tRNA ligase (658 aa).

The TGS domain occupies 1 to 64 (MLNSVSLTFP…GKSGKVEIIT (64 aa)). The segment at 246–549 (DHRKLGREMD…LIENYSGHFP (304 aa)) is catalytic. Residues C343, H394, and H526 each coordinate Zn(2+).

The protein belongs to the class-II aminoacyl-tRNA synthetase family. As to quaternary structure, homodimer. Zn(2+) serves as cofactor.

It is found in the cytoplasm. It carries out the reaction tRNA(Thr) + L-threonine + ATP = L-threonyl-tRNA(Thr) + AMP + diphosphate + H(+). Its function is as follows. Catalyzes the attachment of threonine to tRNA(Thr) in a two-step reaction: L-threonine is first activated by ATP to form Thr-AMP and then transferred to the acceptor end of tRNA(Thr). Also edits incorrectly charged L-seryl-tRNA(Thr). This Mesorhizobium japonicum (strain LMG 29417 / CECT 9101 / MAFF 303099) (Mesorhizobium loti (strain MAFF 303099)) protein is Threonine--tRNA ligase.